Reading from the N-terminus, the 475-residue chain is ATP synthase subunit beta (475 aa).

152–159 is an ATP binding site; that stretch reads GGAGVGKT.

It belongs to the ATPase alpha/beta chains family. As to quaternary structure, F-type ATPases have 2 components, CF(1) - the catalytic core - and CF(0) - the membrane proton channel. CF(1) has five subunits: alpha(3), beta(3), gamma(1), delta(1), epsilon(1). CF(0) has three main subunits: a(1), b(2) and c(9-12). The alpha and beta chains form an alternating ring which encloses part of the gamma chain. CF(1) is attached to CF(0) by a central stalk formed by the gamma and epsilon chains, while a peripheral stalk is formed by the delta and b chains.

The protein resides in the cell membrane. It carries out the reaction ATP + H2O + 4 H(+)(in) = ADP + phosphate + 5 H(+)(out). Its function is as follows. Produces ATP from ADP in the presence of a proton gradient across the membrane. The catalytic sites are hosted primarily by the beta subunits. The polypeptide is ATP synthase subunit beta (Wolbachia pipientis wMel).